We begin with the raw amino-acid sequence, 216 residues long: Probable nicotinate-nucleotide adenylyltransferase (216 aa).

This sequence belongs to the NadD family.

It catalyses the reaction nicotinate beta-D-ribonucleotide + ATP + H(+) = deamido-NAD(+) + diphosphate. Its pathway is cofactor biosynthesis; NAD(+) biosynthesis; deamido-NAD(+) from nicotinate D-ribonucleotide: step 1/1. Functionally, catalyzes the reversible adenylation of nicotinate mononucleotide (NaMN) to nicotinic acid adenine dinucleotide (NaAD). This is Probable nicotinate-nucleotide adenylyltransferase from Shewanella baltica (strain OS223).